Here is a 228-residue protein sequence, read N- to C-terminus: Ribonuclease 3 (228 aa).

An RNase III domain is found at 7–136; sequence LNKLKNEYNI…FNGALFLDQG (130 aa). E49 contributes to the Mg(2+) binding site. Residue D53 is part of the active site. Mg(2+)-binding residues include D122 and E125. Residue E125 is part of the active site. Residues 162-228 enclose the DRBM domain; it reads DYKTDLQELL…AAKAALQKFE (67 aa). The segment at 207–228 is disordered; it reads GEGHNKKAAEQQAAKAALQKFE. The segment covering 216 to 228 has biased composition (low complexity); it reads EQQAAKAALQKFE.

It belongs to the ribonuclease III family. Homodimer. The cofactor is Mg(2+).

Its subcellular location is the cytoplasm. The catalysed reaction is Endonucleolytic cleavage to 5'-phosphomonoester.. In terms of biological role, digests double-stranded RNA. Involved in the processing of primary rRNA transcript to yield the immediate precursors to the large and small rRNAs (23S and 16S). Processes some mRNAs, and tRNAs when they are encoded in the rRNA operon. Processes pre-crRNA and tracrRNA of type II CRISPR loci if present in the organism. The sequence is that of Ribonuclease 3 from Lactobacillus acidophilus (strain ATCC 700396 / NCK56 / N2 / NCFM).